Here is a 185-residue protein sequence, read N- to C-terminus: Translation initiation factor IF-3 (185 aa).

The protein belongs to the IF-3 family. In terms of assembly, monomer.

It is found in the cytoplasm. Its function is as follows. IF-3 binds to the 30S ribosomal subunit and shifts the equilibrium between 70S ribosomes and their 50S and 30S subunits in favor of the free subunits, thus enhancing the availability of 30S subunits on which protein synthesis initiation begins. In Streptococcus pneumoniae serotype 19F (strain G54), this protein is Translation initiation factor IF-3.